The following is a 350-amino-acid chain: Homeobox-leucine zipper protein HOX5 (350 aa).

Positions 83-142 form a DNA-binding region, homeobox; sequence APEKKRRLTAEQVQMLERSFEEENKLEPERKTELARRLGMAPRQVAVWFQNRRARWKTKQ. The interval 141 to 185 is leucine-zipper; it reads KQLEHDFDRLKAAYDALAADHHALLSDNDRLRAQVISLTEKLQDK. The tract at residues 180 to 254 is disordered; the sequence is EKLQDKETSP…TNDDGDGGGA (75 aa). The span at 188-198 shows a compositional bias: low complexity; the sequence is SPSSATITTAA.

The protein belongs to the HD-ZIP homeobox family. Class I subfamily. As to quaternary structure, homodimer. May form a heterodimer with HOX4. Expressed in seedlings, roots, leaves, nodes, internodes, flowers and embryo.

It is found in the nucleus. Its function is as follows. Probable transcription activator that binds to the DNA sequence 5'-CAAT[AT]ATTG-3'. This Oryza sativa subsp. indica (Rice) protein is Homeobox-leucine zipper protein HOX5 (HOX5).